The sequence spans 478 residues: Adenosylhomocysteinase (478 aa).

The substrate site is built by threonine 57, aspartate 139, and glutamate 201. 202-204 (TTT) lines the NAD(+) pocket. 2 residues coordinate substrate: lysine 231 and aspartate 235. NAD(+)-binding positions include asparagine 236, 265 to 270 (GYGDVG), glutamate 288, asparagine 323, 344 to 346 (IGH), and asparagine 392.

The protein belongs to the adenosylhomocysteinase family. The cofactor is NAD(+).

Its subcellular location is the cytoplasm. The enzyme catalyses S-adenosyl-L-homocysteine + H2O = L-homocysteine + adenosine. Its pathway is amino-acid biosynthesis; L-homocysteine biosynthesis; L-homocysteine from S-adenosyl-L-homocysteine: step 1/1. In terms of biological role, may play a key role in the regulation of the intracellular concentration of adenosylhomocysteine. In Corynebacterium efficiens (strain DSM 44549 / YS-314 / AJ 12310 / JCM 11189 / NBRC 100395), this protein is Adenosylhomocysteinase.